Consider the following 308-residue polypeptide: E3 ubiquitin-protein ligase SINAT2 (308 aa).

The segment at 60-96 (CPVCTNLMYPPIHQCPNGHTLCSNCKLRVQNTCPTCR) adopts an RING-type zinc-finger fold. The SBD stretch occupies residues 110 to 303 (VAESLEVPCR…QELKLRVTGR (194 aa)). An SIAH-type zinc finger spans residues 113 to 173 (SLEVPCRYQN…LVVHLKDDHK (61 aa)). C118, C125, H137, C141, C148, C155, H167, and H172 together coordinate Zn(2+).

It belongs to the SINA (Seven in absentia) family. As to quaternary structure, interacts with RAP2-2. Interacts with SINAT6. Interacts with ATG6 and TRAF1A. Interacts with WAV3. Interacts with FREE1. Interacts with ELC/VPS23A.

It is found in the endosome. Its subcellular location is the multivesicular body. It localises to the cytoplasmic vesicle. The protein localises to the autophagosome. It carries out the reaction S-ubiquitinyl-[E2 ubiquitin-conjugating enzyme]-L-cysteine + [acceptor protein]-L-lysine = [E2 ubiquitin-conjugating enzyme]-L-cysteine + N(6)-ubiquitinyl-[acceptor protein]-L-lysine.. It participates in protein modification; protein ubiquitination. Its function is as follows. E3 ubiquitin-protein ligase that mediates ubiquitination and subsequent proteasomal degradation of target proteins. E3 ubiquitin ligases accept ubiquitin from an E2 ubiquitin-conjugating enzyme in the form of a thioester and then directly transfers the ubiquitin to targeted substrates. It probably triggers the ubiquitin-mediated degradation of different substrates. Mediates the proteasomal-dependent degradation of ATG6, a component of the autophagosome complex. Requires TRAF1A/MUSE14 and TRAF1B/MUSE13 to target ATG6 for ubiquitination and subsequent regulation of autophagosome assembly. Modulates directly the ubiquitination and proteasomal-dependent degradation of FREE1, a component of the ESCRT-I complex. Modulates directly the ubiquitination and proteasomal-dependent degradation of ELC/VPS23A, a component of the ESCRT-I complex. The chain is E3 ubiquitin-protein ligase SINAT2 from Arabidopsis thaliana (Mouse-ear cress).